Here is a 405-residue protein sequence, read N- to C-terminus: L-rhamnonate dehydratase (405 aa).

The substrate site is built by H33 and R59. 3 residues coordinate Mg(2+): D226, E252, and E280. The active-site Proton acceptor is H329. E349 contributes to the substrate binding site.

This sequence belongs to the mandelate racemase/muconate lactonizing enzyme family. RhamD subfamily. Homooctamer; tetramer of dimers. Requires Mg(2+) as cofactor.

It carries out the reaction L-rhamnonate = 2-dehydro-3-deoxy-L-rhamnonate + H2O. Functionally, catalyzes the dehydration of L-rhamnonate to 2-keto-3-deoxy-L-rhamnonate (KDR). This chain is L-rhamnonate dehydratase, found in Escherichia coli O6:K15:H31 (strain 536 / UPEC).